Consider the following 389-residue polypeptide: Apoptosis inhibitor U19 (389 aa).

The protein belongs to the beta-herpesvirinae UL38 protein family. In terms of assembly, interacts with host MDM2; this interaction leads to the stabilization of host TP53.

The protein resides in the host cytoplasm. It is found in the host nucleus. Functionally, plays a role in the inhibition of host apoptosis to facilitate efficient viral replication. Promotes stabilization and inactivation of host TP53 through interaction with host MDM2. The polypeptide is Apoptosis inhibitor U19 (U19) (Human herpesvirus 6A (strain Uganda-1102) (HHV-6 variant A)).